We begin with the raw amino-acid sequence, 163 residues long: Probable chemoreceptor glutamine deamidase CheD (163 aa).

Belongs to the CheD family.

The enzyme catalyses L-glutaminyl-[protein] + H2O = L-glutamyl-[protein] + NH4(+). In terms of biological role, probably deamidates glutamine residues to glutamate on methyl-accepting chemotaxis receptors (MCPs), playing an important role in chemotaxis. The polypeptide is Probable chemoreceptor glutamine deamidase CheD (Pyrococcus abyssi (strain GE5 / Orsay)).